We begin with the raw amino-acid sequence, 140 residues long: FLYWCH family member 2 (140 aa).

2 disordered regions span residues 1–39 (MPLP…PRKF) and 84–140 (HPEA…GKSL). Phosphoserine is present on Ser21. Over residues 98–114 (PEQKRSRQDPGTDRTED) the composition is skewed to basic and acidic residues. A compositionally biased stretch (low complexity) spans 118 to 127 (AAGPPEAAGE).

This chain is FLYWCH family member 2 (FLYWCH2), found in Homo sapiens (Human).